The primary structure comprises 771 residues: 5-methyltetrahydropteroyltriglutamate--homocysteine methyltransferase (771 aa).

5-methyltetrahydropteroyltri-L-glutamate is bound by residues 13–16 (RELK) and K128. L-homocysteine contacts are provided by residues 451–453 (IGS) and E504. L-methionine contacts are provided by residues 451-453 (IGS) and E504. Residues 535–536 (RC) and W581 each bind 5-methyltetrahydropteroyltri-L-glutamate. An L-homocysteine-binding site is contributed by D619. Position 619 (D619) interacts with L-methionine. E625 contributes to the 5-methyltetrahydropteroyltri-L-glutamate binding site. The Zn(2+) site is built by H661, C663, and E685. H714 (proton donor) is an active-site residue. C746 lines the Zn(2+) pocket.

It belongs to the vitamin-B12 independent methionine synthase family. Requires Zn(2+) as cofactor.

The catalysed reaction is 5-methyltetrahydropteroyltri-L-glutamate + L-homocysteine = tetrahydropteroyltri-L-glutamate + L-methionine. Its pathway is amino-acid biosynthesis; L-methionine biosynthesis via de novo pathway; L-methionine from L-homocysteine (MetE route): step 1/1. In terms of biological role, catalyzes the transfer of a methyl group from 5-methyltetrahydrofolate to homocysteine resulting in methionine formation. The polypeptide is 5-methyltetrahydropteroyltriglutamate--homocysteine methyltransferase (Nitrobacter winogradskyi (strain ATCC 25391 / DSM 10237 / CIP 104748 / NCIMB 11846 / Nb-255)).